A 163-amino-acid chain; its full sequence is 3-hydroxyacyl-[acyl-carrier-protein] dehydratase FabZ (163 aa).

Residue His-58 is part of the active site.

This sequence belongs to the thioester dehydratase family. FabZ subfamily.

It localises to the cytoplasm. The enzyme catalyses a (3R)-hydroxyacyl-[ACP] = a (2E)-enoyl-[ACP] + H2O. In terms of biological role, involved in unsaturated fatty acids biosynthesis. Catalyzes the dehydration of short chain beta-hydroxyacyl-ACPs and long chain saturated and unsaturated beta-hydroxyacyl-ACPs. This Francisella tularensis subsp. tularensis (strain FSC 198) protein is 3-hydroxyacyl-[acyl-carrier-protein] dehydratase FabZ.